The following is a 579-amino-acid chain: Acyl-coenzyme A synthetase ACSM5, mitochondrial (579 aa).

The transit peptide at 1–26 (MRPWLRHLVLQALRNSRAFCGSHGKP) directs the protein to the mitochondrion. Lys97 is modified (N6-acetyllysine; alternate). Lys97 carries the N6-succinyllysine; alternate modification. An N6-acetyllysine modification is found at Lys152. Residue 230–238 (TSGTTGAPK) participates in ATP binding. The residue at position 303 (Lys303) is an N6-acetyllysine; alternate. N6-succinyllysine; alternate is present on Lys303. Residues 368–373 (EGYGQS), Asp455, Arg470, and Lys566 each bind ATP.

This sequence belongs to the ATP-dependent AMP-binding enzyme family. Requires Mg(2+) as cofactor. Mn(2+) serves as cofactor. As to expression, detected in kidney and liver.

The protein localises to the mitochondrion matrix. It carries out the reaction a medium-chain fatty acid + ATP + CoA = a medium-chain fatty acyl-CoA + AMP + diphosphate. Functionally, catalyzes the activation of fatty acids by CoA to produce an acyl-CoA, the first step in fatty acid metabolism. In Homo sapiens (Human), this protein is Acyl-coenzyme A synthetase ACSM5, mitochondrial (ACSM5).